Here is a 400-residue protein sequence, read N- to C-terminus: Laminin subunit B (400 aa).

3 Laminin EGF-like domains span residues E1–P5, C6–S53, and C54–P100. Intrachain disulfides connect C6–C18, C8–C25, C27–C36, C39–C51, C54–C66, C56–C73, C75–C84, and C87–C98. Residues C101 to A400 form a domain II and I region. The stretch at K140 to Q235 forms a coiled coil. N-linked (GlcNAc...) asparagine glycans are attached at residues N160, N175, N216, N266, N283, N310, and N356. Residues E353–A400 adopt a coiled-coil conformation. The interval Y369–A400 is disordered. Low complexity predominate over residues S371–N383.

As to quaternary structure, laminin is a complex glycoprotein, consisting of three different polypeptide chains (alpha, beta, gamma), which are bound to each other by disulfide bonds into a cross-shaped molecule comprising one long and three short arms with globules at each end. As to expression, individual glial and muscle cells.

It localises to the secreted. Its subcellular location is the extracellular space. The protein resides in the extracellular matrix. In terms of biological role, binding to cells via a high affinity receptor, laminin is thought to mediate the attachment, migration and organization of cells into tissues during embryonic development by interacting with other extracellular matrix components. This is Laminin subunit B from Hirudo medicinalis (Medicinal leech).